We begin with the raw amino-acid sequence, 1312 residues long: Beta-N-acetylhexosaminidase (1312 aa).

Residues 1-33 (MKHEKQQRFSIRKYAVGAASVLIGFAFQAQTVA) form the signal peptide. Polar residues predominate over residues 38-59 (TPTTTENQPTIHTVSDSPQSSE). The tract at residues 38 to 178 (TPTTTENQPT…ATEAGKERAA (141 aa)) is disordered. The segment covering 118–177 (AEKETANKKAEEASPKKEEAKEVDSKESNTDKTDKDKPAKKDEAKAEADKPATEAGKERA) has biased composition (basic and acidic residues). Catalytic domain regions lie at residues 176–616 (RAAT…TPEA) and 621–1046 (EAKR…PAVT). G5 domains lie at 1059 to 1138 (NVET…GAPV) and 1150 to 1230 (TTEV…GTMV). The disordered stretch occupies residues 1244–1290 (EEKPKLEIPSQPAPSTAPAEESKVLPQDPAPVVTEKKLPETGTHDSA). The span at 1277 to 1286 (TEKKLPETGT) shows a compositional bias: basic and acidic residues. The LPXTG sorting signal motif lies at 1281-1285 (LPETG). Thr1284 bears the Pentaglycyl murein peptidoglycan amidated threonine mark. Positions 1285–1312 (GTHDSAGLVVAGLMSTLAAYGLTKRKED) are cleaved as a propeptide — removed by sortase.

This sequence belongs to the glycosyl hydrolase 20 family.

It is found in the secreted. Its subcellular location is the cell wall. The catalysed reaction is Hydrolysis of terminal non-reducing N-acetyl-D-hexosamine residues in N-acetyl-beta-D-hexosaminides.. The polypeptide is Beta-N-acetylhexosaminidase (strH) (Streptococcus pneumoniae serotype 4 (strain ATCC BAA-334 / TIGR4)).